Reading from the N-terminus, the 178-residue chain is ATP synthase subunit delta (178 aa).

Belongs to the ATPase delta chain family. In terms of assembly, F-type ATPases have 2 components, F(1) - the catalytic core - and F(0) - the membrane proton channel. F(1) has five subunits: alpha(3), beta(3), gamma(1), delta(1), epsilon(1). F(0) has three main subunits: a(1), b(2) and c(10-14). The alpha and beta chains form an alternating ring which encloses part of the gamma chain. F(1) is attached to F(0) by a central stalk formed by the gamma and epsilon chains, while a peripheral stalk is formed by the delta and b chains.

It localises to the cell inner membrane. Functionally, f(1)F(0) ATP synthase produces ATP from ADP in the presence of a proton or sodium gradient. F-type ATPases consist of two structural domains, F(1) containing the extramembraneous catalytic core and F(0) containing the membrane proton channel, linked together by a central stalk and a peripheral stalk. During catalysis, ATP synthesis in the catalytic domain of F(1) is coupled via a rotary mechanism of the central stalk subunits to proton translocation. Its function is as follows. This protein is part of the stalk that links CF(0) to CF(1). It either transmits conformational changes from CF(0) to CF(1) or is implicated in proton conduction. The polypeptide is ATP synthase subunit delta (Chromobacterium violaceum (strain ATCC 12472 / DSM 30191 / JCM 1249 / CCUG 213 / NBRC 12614 / NCIMB 9131 / NCTC 9757 / MK)).